An 87-amino-acid polypeptide reads, in one-letter code: Acyl-CoA-binding protein (87 aa).

Residues 3–87 enclose the ACB domain; it reads LKEEFEEHAV…KVKQLLEESA (85 aa). An acyl-CoA-binding positions include 30–34, K56, and Y75; that span reads YGLYK.

Belongs to the ACBP family.

In terms of biological role, binds medium- and long-chain acyl-CoA esters with very high affinity and may function as an intracellular carrier of acyl-CoA esters. In Fritillaria agrestis (Stinkbells), this protein is Acyl-CoA-binding protein (ACABP).